The chain runs to 148 residues: Deoxyuridine 5'-triphosphate nucleotidohydrolase (148 aa).

Substrate-binding positions include R67–G69, N80, L84–D86, and M94.

It belongs to the dUTPase family. Mg(2+) is required as a cofactor.

It catalyses the reaction dUTP + H2O = dUMP + diphosphate + H(+). The protein operates within pyrimidine metabolism; dUMP biosynthesis; dUMP from dCTP (dUTP route): step 2/2. In terms of biological role, this enzyme is involved in nucleotide metabolism: it produces dUMP, the immediate precursor of thymidine nucleotides and it decreases the intracellular concentration of dUTP so that uracil cannot be incorporated into DNA. The polypeptide is Deoxyuridine 5'-triphosphate nucleotidohydrolase (Burkholderia cenocepacia (strain HI2424)).